Reading from the N-terminus, the 400-residue chain is Argininosuccinate synthase (400 aa).

8–16 provides a ligand contact to ATP; it reads AYSGGLDTS. Tyr87 is an L-citrulline binding site. Gly117 contacts ATP. Thr119, Asn123, and Asp124 together coordinate L-aspartate. L-citrulline is bound at residue Asn123. Residues Arg127, Ser175, Glu260, and Tyr272 each coordinate L-citrulline.

It belongs to the argininosuccinate synthase family. Type 1 subfamily. As to quaternary structure, homotetramer.

The protein localises to the cytoplasm. It carries out the reaction L-citrulline + L-aspartate + ATP = 2-(N(omega)-L-arginino)succinate + AMP + diphosphate + H(+). It functions in the pathway amino-acid biosynthesis; L-arginine biosynthesis; L-arginine from L-ornithine and carbamoyl phosphate: step 2/3. This is Argininosuccinate synthase from Mycolicibacterium gilvum (strain PYR-GCK) (Mycobacterium gilvum (strain PYR-GCK)).